The sequence spans 382 residues: MKITNITTYRLPPRWMFLKIETDEGIVGWGEPVIEGRARTVEAAVHEFGDYLIGQDPARINDLWQVMYRGGFYRGGPIMMSAIAGIDQALWDIKGKVLNAPVWQLMGGLVRDKIKAYSWVGGDRPAEVIDGIKKLRGIGFDTFKLNGCEEMGIIDNSRAVDAAVNTVAQIREAFGNEIEFGLDFHGRVSAPMAKVLIKELEPYRPLFIEEPVLAEQAEYYPRLAAQTHIPIAAGERMFSRFEFKRVLEAGGVAILQPDLSHAGGITECYKIAGMAEAYDVGLAPHCPLGPIALAACLHVDFVSHNAVFQEQSMGIHYNKGAELLDFVKNKEDFNMEGGFFKPLMKPGLGVEIDEARVIELSKNAPDWRNPLWRYEDGSVAEW.

Mg(2+) is bound at residue D183. The active-site Proton donor is H185. The Mg(2+) site is built by E209 and E235. Residue H285 is the Proton acceptor of the active site.

It belongs to the mandelate racemase/muconate lactonizing enzyme family. GalD subfamily. Mg(2+) is required as a cofactor.

It catalyses the reaction D-galactonate = 2-dehydro-3-deoxy-D-galactonate + H2O. It participates in carbohydrate acid metabolism; D-galactonate degradation; D-glyceraldehyde 3-phosphate and pyruvate from D-galactonate: step 1/3. In terms of biological role, catalyzes the dehydration of D-galactonate to 2-keto-3-deoxy-D-galactonate. This chain is D-galactonate dehydratase, found in Klebsiella pneumoniae subsp. pneumoniae (strain ATCC 700721 / MGH 78578).